The chain runs to 115 residues: U3-lycotoxin-Ls1q (115 aa).

Residues 1–20 (MKFVLLFGVLLVTLFSYSSA) form the signal peptide. The propeptide occupies 21–44 (EMFDDFDQADEDELLSLIEKEEAR). 4 disulfides stabilise this stretch: C48-C63, C55-C72, C62-C87, and C74-C85.

Belongs to the neurotoxin 19 (CSTX) family. 01 subfamily. Expressed by the venom gland.

It is found in the secreted. The sequence is that of U3-lycotoxin-Ls1q from Lycosa singoriensis (Wolf spider).